The following is a 79-amino-acid chain: Moronecidin (79 aa).

An N-terminal signal peptide occupies residues M1 to A22. G44 carries the post-translational modification Glycine amide. Residues G45–Y68 are disordered. The propeptide occupies A47–D79. Residues Q52 to Y68 show a composition bias toward low complexity.

As to expression, expressed in gill, skin, intestine, spleen, anterior kidney, and blood cells.

The protein localises to the secreted. Its function is as follows. Antimicrobial peptide with broad-spectrum activity against Gram-positive and Gram-negative bacteria as well as against a variety of fungi. Rapidly inactivates both channel catfish herpesvirus (ED(50)=4 uM) and frog virus 3 (ED(50)=13 uM) over a wide temperature range. Seems to disrupt the membranes by adopting an alpha helical conformation. This chain is Moronecidin, found in Morone chrysops (White bass).